A 129-amino-acid chain; its full sequence is Small ribosomal subunit protein uS11 (129 aa).

This sequence belongs to the universal ribosomal protein uS11 family. As to quaternary structure, part of the 30S ribosomal subunit. Interacts with proteins S7 and S18. Binds to IF-3.

Functionally, located on the platform of the 30S subunit, it bridges several disparate RNA helices of the 16S rRNA. Forms part of the Shine-Dalgarno cleft in the 70S ribosome. This is Small ribosomal subunit protein uS11 from Photobacterium profundum (strain SS9).